A 158-amino-acid polypeptide reads, in one-letter code: Transcription elongation factor GreB (158 aa).

The protein belongs to the GreA/GreB family. GreB subfamily.

Its function is as follows. Necessary for efficient RNA polymerase transcription elongation past template-encoded arresting sites. The arresting sites in DNA have the property of trapping a certain fraction of elongating RNA polymerases that pass through, resulting in locked ternary complexes. Cleavage of the nascent transcript by cleavage factors such as GreA or GreB allows the resumption of elongation from the new 3'terminus. GreB releases sequences of up to 9 nucleotides in length. In Escherichia coli (strain K12), this protein is Transcription elongation factor GreB.